Reading from the N-terminus, the 444-residue chain is Trigger factor (444 aa).

A PPIase FKBP-type domain is found at Gly-166–Ala-251.

This sequence belongs to the FKBP-type PPIase family. Tig subfamily.

It localises to the cytoplasm. It carries out the reaction [protein]-peptidylproline (omega=180) = [protein]-peptidylproline (omega=0). Its function is as follows. Involved in protein export. Acts as a chaperone by maintaining the newly synthesized protein in an open conformation. Functions as a peptidyl-prolyl cis-trans isomerase. This is Trigger factor from Cereibacter sphaeroides (strain ATCC 17025 / ATH 2.4.3) (Rhodobacter sphaeroides).